The sequence spans 875 residues: MTNTKQKINAVFLSALMVMSVFAAAVAFSGAAAAANRGAGFTYSTGPTDSNGGGNGDSVGQVGPGAVVFQGEEDLEDGGNFGSNTDIGQLQKVSGDNSGILLGNPIPQDQPTGSYTFDGNSGTDGVTLQTPRVTSVEVQNGGSGDVTGSTLQTSSSGPDAFVRADYNFQEAEDLEITVEDENGLEVTNEIVVQKTGLPTADRNNDNGASGSNGDFDVGWELDTTDIDEGQYTITVEGTEDLTFGDASETVTVNITSDQQASLNLDNDEVVQGENLQFNVENSPEGNYHVVLVESSEFRDGITADQASRIFRNVGDVQEVGLVDNTGPVSASTVASNVGSDQEVADVTRYAYGVVEIDGGSGVGSIETQFLDDSSVDVELYPASDSSNDGYASGGSHASSVTVRDTDGDGTDDSEDAIVTDLLETDDDQSFDVVEGEITLDSPSGAYITGSQIDVNGTANQGVDQVALYARDNNDYELIEIDGSNTVSVDGDDTFSEEDVVLSQGSKGGNSIVSLPGSYRIGVIDVQDADLDSDGTVDDTLTTSDFNSGVSGATALRVTDTALNGTFTTYNGQIASDDGQIDVDGQAPGKDNVIVAFVDSRGNAAAQVVSVDDDDSFSEEDIDITSLSEGTVTAHILSSGRDGEYGDTGTSSDSAFVNTIETGYAGGSSTGDQVREQILANTVDDTASDDLIVNEQFRLTDGLTTIESVSSPVEANGTLEVQGNTNRVPDDNTITVEILNSEDESVTVESTDEWGSDGQWSVNVDLSDVDIEPGNYTVEADDGDNTDRTSVTVVEAGSLEEEQPDTETPEPDTETPEPDTETPEPDTETPEPDTETPEPDTETEEATTEASGPGFTAAIALIALVAAALLAVRRDN.

A signal peptide spans 1–23 (MTNTKQKINAVFLSALMVMSVFA). Positions 137–157 (EVQNGGSGDVTGSTLQTSSSG) are enriched in polar residues. 2 disordered regions span residues 137-158 (EVQNGGSGDVTGSTLQTSSSGP) and 197-217 (LPTADRNNDNGASGSNGDFDV). Residues 205 to 216 (DNGASGSNGDFD) show a composition bias toward low complexity. Asn253 is a glycosylation site (N-linked (GlcNAc...) asparagine). The interval 380-414 (YPASDSSNDGYASGGSHASSVTVRDTDGDGTDDSE) is disordered. Positions 383–402 (SDSSNDGYASGGSHASSVTV) are enriched in polar residues. N-linked (GlcNAc...) asparagine glycosylation is found at Asn455, Asn563, Asn715, and Asn774. The tract at residues 794-852 (EAGSLEEEQPDTETPEPDTETPEPDTETPEPDTETPEPDTETPEPDTETEEATTEASGP) is disordered. Residues 797–846 (SLEEEQPDTETPEPDTETPEPDTETPEPDTETPEPDTETPEPDTETEEAT) are compositionally biased toward acidic residues. Residues 851–875 (GPGFTAAIALIALVAAALLAVRRDN) traverse the membrane as a helical segment. A PGF sorting signal motif is present at residues 852–854 (PGF).

This sequence belongs to the halobacterial S-layer protein family. Post-translationally, asn-455 is glycosylated by a pentasaccharide comprising a hexose, 2 hexuronic acids, a methyl ester of a hexuronic acid and a final hexose. The complete pentasaccharide is first assembled on dolichol phosphate and then transferred the glycan to the target Asn. In terms of processing, cleaved by the archaeosortase ArtA at the C-terminus, with removal of a short hydrophobic segment. Lipidation.

The protein localises to the secreted. It is found in the cell wall. The protein resides in the S-layer. Its subcellular location is the cell membrane. In terms of biological role, S-layer protein. The S-layer is a paracrystalline mono-layered assembly of proteins which coat the surface of the cell. The protein is Cell surface glycoprotein (csg1) of Haloarcula marismortui (strain ATCC 43049 / DSM 3752 / JCM 8966 / VKM B-1809) (Halobacterium marismortui).